A 31-amino-acid chain; its full sequence is Malate dehydrogenase, mitochondrial (31 aa).

NAD(+) contacts are provided by residues 9 to 19 (GIGQPLSLLMK) and 20 to 31 (DDLFNINAGIVK).

Belongs to the LDH/MDH superfamily. MDH type 1 family. Homodimer.

The protein localises to the mitochondrion matrix. The catalysed reaction is (S)-malate + NAD(+) = oxaloacetate + NADH + H(+). This chain is Malate dehydrogenase, mitochondrial, found in Imperata cylindrica (Cogon grass).